Here is a 711-residue protein sequence, read N- to C-terminus: MDVSSLAAAAPSLVAPPLHHKPHLAFPPHHPSPARGSIGVRCAHSPSPHPLRPSAATADEEVSLPPSLRVSRLAEEFRVSPDAADRARRLLARAAALPRLGEADRVAANRVMGCVAQVWLVGRCDGAGRMRFAADSDSELSRGYCACLVSALDGARPEEVLDVDPADLAPLGGAAAGTGARSRASTWHNVLIGMQKRARAAIAAREGRPAGEPFPSLIIGRDGAIRAQGTYAEAQAMFLSPNESKTSELVKSLREKKIGIVAHFYMDPEVQGILTASKKHWPHIHISDSLVMADSAVKMAEAGCEYITVLGVDFMSENVRAILDQAGYSKVGVYRMSSDQIGCSLADAASSSAYTHFLKEASRSPPSLHVIYINTSLETKAHAHELVPTITCTSSNVVATILQAFAQIPGLNVWYGPDSYMGANIADLFQRMAVMSDEEIAEVHPSHNKKSINALLPRLHYYQDGNCIVHDMFGHEVVDKIKEQYCDAFLTAHFEVPGEMFSLSMEAKTRGMGVVGSTQNILDFIKNHLMEALDRNIDDHLQFVLGTESGMITSIVAAVRELFDSYKTSQQSANIEVEIVFPVSSDAVSNTSVNGSHHLDSSTVTDLDNVSVVPGVSSGEGCSIHGGCASCPYMKMNSLRSLLKVCHQLPDRDNRLVAYQASRFNAKTPLGKLVAEVGCEPILHMRHFQATKRLPDKLVHHVIHGKGEPTS.

A chloroplast-targeting transit peptide spans 1–41 (MDVSSLAAAAPSLVAPPLHHKPHLAFPPHHPSPARGSIGVR). The tract at residues 17–63 (PLHHKPHLAFPPHHPSPARGSIGVRCAHSPSPHPLRPSAATADEEVS) is disordered. Cys-114 acts as the Cysteine persulfide intermediate in catalysis. Iminosuccinate contacts are provided by His-263 and Ser-289. Position 343 (Cys-343) interacts with [4Fe-4S] cluster. Iminosuccinate-binding positions include 372–374 (YIN) and Ser-394. Residue Cys-467 coordinates [4Fe-4S] cluster. Residues 493-495 (HFE) and Thr-518 each bind iminosuccinate. Cys-631 lines the [4Fe-4S] cluster pocket.

It belongs to the quinolinate synthase family. Type 1 subfamily. As to quaternary structure, homodimer. [4Fe-4S] cluster is required as a cofactor.

The protein resides in the plastid. Its subcellular location is the chloroplast. The enzyme catalyses iminosuccinate + dihydroxyacetone phosphate = quinolinate + phosphate + 2 H2O + H(+). The protein operates within cofactor biosynthesis; NAD(+) biosynthesis; quinolinate from iminoaspartate: step 1/1. Functionally, catalyzes the condensation of iminoaspartate with dihydroxyacetone phosphate to form quinolinate. In Oryza sativa subsp. japonica (Rice), this protein is Quinolinate synthase, chloroplastic.